We begin with the raw amino-acid sequence, 143 residues long: Large ribosomal subunit protein uL11 (143 aa).

This sequence belongs to the universal ribosomal protein uL11 family. Part of the ribosomal stalk of the 50S ribosomal subunit. Interacts with L10 and the large rRNA to form the base of the stalk. L10 forms an elongated spine to which L12 dimers bind in a sequential fashion forming a multimeric L10(L12)X complex. One or more lysine residues are methylated.

Functionally, forms part of the ribosomal stalk which helps the ribosome interact with GTP-bound translation factors. This is Large ribosomal subunit protein uL11 from Teredinibacter turnerae (strain ATCC 39867 / T7901).